A 797-amino-acid chain; its full sequence is Cleavage factor two protein 2 (797 aa).

Disordered regions lie at residues 519 to 557 (ENDS…EVPS) and 677 to 703 (PSEE…KKEE). The span at 684-703 (KEEVEKKDGDKERNEEKKEE) shows a compositional bias: basic and acidic residues.

In terms of assembly, component of the cleavage and polyadenylation factor (CPF) complex, which is composed of cft1, cft2, ysh1, pta1, swd2, pfs2, dis2, yth1, ssu72, and fip1.

The protein localises to the nucleus. In terms of biological role, RNA-binding component of the cleavage and polyadenylation factor (CPF) complex, which plays a key role in polyadenylation-dependent pre-mRNA 3'-end formation and cooperates with cleavage factors including the CFIA complex and NAB4/CFIB. May be involved in poly(A)-site recognition. May be involved in the association of the CPF, CPFIA and RNA polymerase II complexes. The sequence is that of Cleavage factor two protein 2 (cft2) from Schizosaccharomyces pombe (strain 972 / ATCC 24843) (Fission yeast).